Consider the following 434-residue polypeptide: Eukaryotic peptide chain release factor subunit 1-1 (434 aa).

It belongs to the eukaryotic release factor 1 family. Heterodimer of two subunits, one of which binds GTP.

The protein localises to the cytoplasm. Functionally, directs the termination of nascent peptide synthesis (translation) in response to the termination codons UAA, UAG and UGA. Modulates plant growth and development. The protein is Eukaryotic peptide chain release factor subunit 1-1 of Brassica oleracea var. botrytis (Cauliflower).